We begin with the raw amino-acid sequence, 112 residues long: UPF0060 membrane protein SCO3297 (112 aa).

4 helical membrane-spanning segments follow: residues 8-28, 33-53, 62-82, and 88-108; these read ALFV…WQGV, GWLW…VATF, ILAA…VVAD, and RWDI…MWAP.

It belongs to the UPF0060 family.

It localises to the cell membrane. The sequence is that of UPF0060 membrane protein SCO3297 from Streptomyces coelicolor (strain ATCC BAA-471 / A3(2) / M145).